A 295-amino-acid polypeptide reads, in one-letter code: 4-hydroxy-tetrahydrodipicolinate synthase (295 aa).

Thr-48 serves as a coordination point for pyruvate. Tyr-135 functions as the Proton donor/acceptor in the catalytic mechanism. The Schiff-base intermediate with substrate role is filled by Lys-163. Val-204 is a binding site for pyruvate.

It belongs to the DapA family. As to quaternary structure, homotetramer; dimer of dimers.

It localises to the cytoplasm. It carries out the reaction L-aspartate 4-semialdehyde + pyruvate = (2S,4S)-4-hydroxy-2,3,4,5-tetrahydrodipicolinate + H2O + H(+). Its pathway is amino-acid biosynthesis; L-lysine biosynthesis via DAP pathway; (S)-tetrahydrodipicolinate from L-aspartate: step 3/4. In terms of biological role, catalyzes the condensation of (S)-aspartate-beta-semialdehyde [(S)-ASA] and pyruvate to 4-hydroxy-tetrahydrodipicolinate (HTPA). The chain is 4-hydroxy-tetrahydrodipicolinate synthase from Francisella tularensis subsp. novicida (strain U112).